Here is a 614-residue protein sequence, read N- to C-terminus: BPI fold-containing family B member 4 (614 aa).

The signal sequence occupies residues 1–18 (MWMAWCVAALSVVAVCGT). Asparagine 273 carries N-linked (GlcNAc...) asparagine glycosylation. A disulfide bond links cysteine 295 and cysteine 332.

It belongs to the BPI/LBP/Plunc superfamily. BPI/LBP family. Expressed in nasal tissue.

It localises to the secreted. The protein resides in the cytoplasm. Functionally, may have the capacity to recognize and bind specific classes of odorants. May act as a carrier molecule, transporting odorants across the mucus layer to access receptor sites. May serve as a primary defense mechanism by recognizing and removing potentially harmful odorants or pathogenic microorganisms from the mucosa or clearing excess odorant from mucus to enable new odorant stimuli to be received. This is BPI fold-containing family B member 4 (BPIFB4) from Homo sapiens (Human).